Here is a 191-residue protein sequence, read N- to C-terminus: Large ribosomal subunit protein uL6 (191 aa).

This sequence belongs to the universal ribosomal protein uL6 family. As to quaternary structure, component of the large ribosomal subunit. Mature ribosomes consist of a small (40S) and a large (60S) subunit. The 40S subunit contains about 32 different proteins and 1 molecule of RNA (18S). The 60S subunit contains 45 different proteins and 3 molecules of RNA (25S, 5.8S and 5S).

It localises to the cytoplasm. Functionally, component of the ribosome, a large ribonucleoprotein complex responsible for the synthesis of proteins in the cell. The small ribosomal subunit (SSU) binds messenger RNAs (mRNAs) and translates the encoded message by selecting cognate aminoacyl-transfer RNA (tRNA) molecules. The large subunit (LSU) contains the ribosomal catalytic site termed the peptidyl transferase center (PTC), which catalyzes the formation of peptide bonds, thereby polymerizing the amino acids delivered by tRNAs into a polypeptide chain. The nascent polypeptides leave the ribosome through a tunnel in the LSU and interact with protein factors that function in enzymatic processing, targeting, and the membrane insertion of nascent chains at the exit of the ribosomal tunnel. The protein is Large ribosomal subunit protein uL6 of Candida albicans (strain SC5314 / ATCC MYA-2876) (Yeast).